A 613-amino-acid chain; its full sequence is Transcription factor cbf11 (613 aa).

Positions 32 to 58 (NNGLHNQEDGAGGRNENSERVGSGSPG) are disordered.

The protein belongs to the Su(H) family.

The protein resides in the cytoplasm. It localises to the nucleus. Transcription factor that behaves as a negative regulator of adhesion. Recognizes specifically the canonical CSL response element GTGA/GGAA. May also play a cbf12-antagonistic role in the regulation of a number of other important processes such as extracellular material production, colony morphogenesis, ploidy maintenance, or meiosis. The polypeptide is Transcription factor cbf11 (cbf11) (Schizosaccharomyces pombe (strain 972 / ATCC 24843) (Fission yeast)).